We begin with the raw amino-acid sequence, 186 residues long: Threonylcarbamoyl-AMP synthase (186 aa).

Positions 2-186 (PNEFELAVAA…ARTGAIIRPS (185 aa)) constitute a YrdC-like domain.

The protein belongs to the SUA5 family. TsaC subfamily.

The protein resides in the cytoplasm. It catalyses the reaction L-threonine + hydrogencarbonate + ATP = L-threonylcarbamoyladenylate + diphosphate + H2O. Functionally, required for the formation of a threonylcarbamoyl group on adenosine at position 37 (t(6)A37) in tRNAs that read codons beginning with adenine. Catalyzes the conversion of L-threonine, HCO(3)(-)/CO(2) and ATP to give threonylcarbamoyl-AMP (TC-AMP) as the acyladenylate intermediate, with the release of diphosphate. This chain is Threonylcarbamoyl-AMP synthase, found in Aeromonas hydrophila subsp. hydrophila (strain ATCC 7966 / DSM 30187 / BCRC 13018 / CCUG 14551 / JCM 1027 / KCTC 2358 / NCIMB 9240 / NCTC 8049).